Consider the following 146-residue polypeptide: Large ribosomal subunit protein uL15 (146 aa).

A disordered region spans residues 1-56 (MKLHELKAAEGANKASKRVGRGTGSGLGKTSGKGQNGQNSRSGGGVRPGFEGGQMP). 2 stretches are compositionally biased toward gly residues: residues 21–35 (RGTG…GKGQ) and 42–52 (SGGGVRPGFEG).

The protein belongs to the universal ribosomal protein uL15 family. In terms of assembly, part of the 50S ribosomal subunit.

Binds to the 23S rRNA. The sequence is that of Large ribosomal subunit protein uL15 from Clostridium botulinum (strain Langeland / NCTC 10281 / Type F).